The primary structure comprises 845 residues: ATPase morc-1 (845 aa).

Residues N43, 88-90 (SAK), and 97-103 (RYGNGLK) each bind ATP. Residue N43 coordinates Mg(2+). A coiled-coil region spans residues 284–311 (AAYNKILDEKNETVKKCEEEKALVMSEI). K422 is a binding site for ATP. Disordered regions lie at residues 566 to 590 (LPQKRLTNSAPSSSDSQNSIRSASS) and 628 to 739 (KMEP…GKAV). A compositionally biased stretch (low complexity) spans 574–590 (SAPSSSDSQNSIRSASS). Residues 637-646 (HDSHIAEVQR) show a composition bias toward basic and acidic residues.

Predominantly forms monomers and dimers, but multimerizes to form trimers and tetramers upon DNA binding. As to expression, expressed in germline and somatic cells.

The protein localises to the nucleus. Its subcellular location is the nuclear body. The enzyme catalyses ATP + H2O = ADP + phosphate + H(+). Its function is as follows. Binds non-specifically to DNA and forms static foci which grow by recruiting other morc-1 molecules, and thereby stimulates conformational changes and compaction of DNA, which appears to be enhanced by ATP-binding, but does not require ATP activity. Preferentially binds to long DNAs. Compacts and entraps segments of DNA by sequentially forming loops along the DNA, beginning at the free ends of single- and double-tethered DNA. Does not extrude the DNA loops on compacted double-tethered DNA. Involved in gene silencing. Plays a role in germline RNA interference (RNAi), and in particular, the silencing of endogenous small interfering RNA (endo-siRNA) target genes. May play a role in heterochromatin localization and condensation, and the siRNAi-directed trimethylation of 'Lys-9' of histone H3 in hermaphrodite X chromosomes. Promotes transgenerational epigenetic inheritance and germline immortality. This is ATPase morc-1 from Caenorhabditis elegans.